The primary structure comprises 292 residues: 1,4-dihydroxy-2-naphthoate octaprenyltransferase (292 aa).

The next 6 helical transmembrane spans lie at Ala-35–Val-55, Ala-101–Ile-121, Gly-137–Gly-157, Val-166–Val-186, Leu-220–Val-240, and Thr-271–Leu-291.

The protein belongs to the MenA family. Type 1 subfamily. Mg(2+) is required as a cofactor.

Its subcellular location is the cell membrane. The catalysed reaction is an all-trans-polyprenyl diphosphate + 1,4-dihydroxy-2-naphthoate + H(+) = a 2-demethylmenaquinol + CO2 + diphosphate. Its pathway is quinol/quinone metabolism; menaquinone biosynthesis; menaquinol from 1,4-dihydroxy-2-naphthoate: step 1/2. With respect to regulation, activity is abolished by EDTA. Inhibited by Ro 48-8071, which is non-competitive with regard to DHNA and competitive with regard to the isoprenyldiphosphate substrate. Conversion of 1,4-dihydroxy-2-naphthoate (DHNA) to demethylmenaquinone (DMK). Can use a variety of allylic isoprenyl diphosphates as substrates but has a requirement for at least three isoprene units. The polypeptide is 1,4-dihydroxy-2-naphthoate octaprenyltransferase (Mycobacterium tuberculosis (strain ATCC 25618 / H37Rv)).